The primary structure comprises 336 residues: 3-isopropylmalate dehydrogenase (336 aa).

4 residues coordinate substrate: R87, R97, R121, and D211. Mg(2+)-binding residues include D211, D235, and D239. 271 to 283 (GSAPDIAGQGIAD) contacts NAD(+).

Belongs to the isocitrate and isopropylmalate dehydrogenases family. LeuB type 2 subfamily. Homodimer. It depends on Mg(2+) as a cofactor. The cofactor is Mn(2+).

The protein resides in the cytoplasm. It catalyses the reaction (2R,3S)-3-isopropylmalate + NAD(+) = 4-methyl-2-oxopentanoate + CO2 + NADH. It participates in amino-acid biosynthesis; L-leucine biosynthesis; L-leucine from 3-methyl-2-oxobutanoate: step 3/4. Catalyzes the oxidation of 3-carboxy-2-hydroxy-4-methylpentanoate (3-isopropylmalate) to 3-carboxy-4-methyl-2-oxopentanoate. The product decarboxylates to 4-methyl-2 oxopentanoate. The protein is 3-isopropylmalate dehydrogenase of Rhodococcus jostii (strain RHA1).